We begin with the raw amino-acid sequence, 967 residues long: MAKGFYISKPVGILAILLGVAAVCTIIALSVVYSQEKNRSTESSTAASTAAPTGPTTTVATTLDQSKPWNVYRLPKTLIPDSYNVTLRPYLTPNNKGLYVFTGTNIVRFTCKESTNIVIIHSKRLNYTSHQGHMVALSGVGGFHPQPVIVRTELVELTEYLVVHLQEPLVAGRQYEMNSEFQGELADDLAGFYRSEYMENGVKKVLATTHMQATEARKSFPCFDEPAMKATFNITIIHPNNLVALSNMLPRGPSVPFGEDPTWKVTEFETTPIMSTYLLAYIVSEFSYVETRAPSGVLIRIWARPSAINQGHGDYALKVTGPILDFFSQHYDTPYPLNKSDQIALPDFNAGAMENWGLVTYRESALLYDRQSSSSGNQERVVTVIAHELAHQWFGNLVTLEWWNDLWLNEGFASYVEYLGADFAEPTWNLKDLMVLNDVYRVMAVDALASSHPLSTPASEINTPAQISEVFDSISYSKGASVLRMLSNFLTEDLFKMGIASYLHTYKYGNTIYLNLWEHLQQVVDKQPTIKLPDTVSAIMDRWILQMGFPVITVDTQTGTISQQHFLLDPQSVVTRPSQFNYLWIVPISSVRSGSPQAHYWLPGVEKAQNDLFKTTANDWVLLNLNVTGYYLVNYDNENWKKIQTQLQTDLSVIPVINRAQVIHDAFNLASAQKVPVTLALNNTLFLIQETEYMPWQAALSSLSYFKLMFDRSEVYGPMKRYLKKQVTPLFNHFERVTKNWTDHPQTLMDQYSEINAVSTACSYGVPECEKLAATLFAQWKKNPQNNPIHPNLRSTVYCNAIAQGGEEEWNFVWEQFLKAELVNEADKLRGALACSNQVWILNRFLSYTLDPNLIRKQDVTSTLSSISSNVVGQTLVWDFVQSNWKKLFQDYGTGSFSFSNLIQAVTRRFSTEFELQQLEQFKKNNMDTGFGSATRALEQALEKTKANLKWVKENKDVVLRWFTENS.

Topologically, residues 1-8 (MAKGFYIS) are cytoplasmic. A helical; Signal-anchor for type II membrane protein transmembrane segment spans residues 9 to 32 (KPVGILAILLGVAAVCTIIALSVV). Positions 33 to 66 (YSQEKNRSTESSTAASTAAPTGPTTTVATTLDQS) are cytosolic Ser/Thr-rich junction. Over 33 to 967 (YSQEKNRSTE…VVLRWFTENS (935 aa)) the chain is Extracellular. N-linked (GlcNAc...) asparagine glycosylation is present at Asn38. Residues 41–61 (TESSTAASTAAPTGPTTTVAT) form a disordered region. Positions 67–967 (KPWNVYRLPK…VVLRWFTENS (901 aa)) are metalloprotease. Residues Asn84 and Asn126 are each glycosylated (N-linked (GlcNAc...) asparagine). The residue at position 175 (Tyr175) is a Sulfotyrosine. Residues Asn233 and Asn338 are each glycosylated (N-linked (GlcNAc...) asparagine). 351 to 355 (GAMEN) provides a ligand contact to substrate. His387 provides a ligand contact to Zn(2+). The Proton acceptor role is filled by Glu388. Zn(2+) contacts are provided by His391 and Glu410. Tyr418 bears the Sulfotyrosine mark. 3 N-linked (GlcNAc...) asparagine glycosylation sites follow: Asn626, Asn682, and Asn740. An interaction with FCoV and TGEV spike glycoprotein region spans residues 670–840 (ASAQKVPVTL…GALACSNQVW (171 aa)). Disulfide bonds link Cys762–Cys769 and Cys799–Cys835.

It belongs to the peptidase M1 family. Homodimer. Interacts with SLC6A19. In terms of assembly, (Microbial infection) Interacts with FCoV, CCoV, TGEV and HCoV-229E spike glycoprotein. Zn(2+) serves as cofactor. In terms of processing, sulfated. N- and O-glycosylated. Post-translationally, may undergo proteolysis and give rise to a soluble form.

It is found in the cell membrane. The enzyme catalyses Release of an N-terminal amino acid, Xaa-|-Yaa- from a peptide, amide or arylamide. Xaa is preferably Ala, but may be most amino acids including Pro (slow action). When a terminal hydrophobic residue is followed by a prolyl residue, the two may be released as an intact Xaa-Pro dipeptide.. Functionally, broad specificity aminopeptidase which plays a role in the final digestion of peptides generated from hydrolysis of proteins by gastric and pancreatic proteases. Also involved in the processing of various peptides including peptide hormones, such as angiotensin III and IV, neuropeptides, and chemokines. May also be involved the cleavage of peptides bound to major histocompatibility complex class II molecules of antigen presenting cells. May have a role in angiogenesis and promote cholesterol crystallization. May have a role in amino acid transport by acting as binding partner of amino acid transporter SLC6A19 and regulating its activity. In terms of biological role, (Microbial infection) In case of feline coronavirus (FCoV) infection, serves as a receptor for FCoV spike glycoprotein. It is as well a receptor for other serogroup I coronaviruses, like canine coronavirus (CCoV), porcine transmissible gastroenteritis virus (TGEV), and human coronavirus 229E (HCoV-229E). Also serves as a receptor for infectious bronchitis virus (IBV, Arkansas 99 serotype) in serogroup III. This chain is Aminopeptidase N (ANPEP), found in Felis catus (Cat).